The following is a 243-amino-acid chain: Pyridoxine 5'-phosphate synthase (243 aa).

Residue asparagine 9 participates in 3-amino-2-oxopropyl phosphate binding. 11-12 (DH) provides a ligand contact to 1-deoxy-D-xylulose 5-phosphate. Residue arginine 20 coordinates 3-amino-2-oxopropyl phosphate. The active-site Proton acceptor is histidine 45. 2 residues coordinate 1-deoxy-D-xylulose 5-phosphate: arginine 47 and histidine 52. Residue glutamate 72 is the Proton acceptor of the active site. Threonine 102 is a 1-deoxy-D-xylulose 5-phosphate binding site. The active-site Proton donor is the histidine 193. Residues glycine 194 and 215 to 216 (GH) contribute to the 3-amino-2-oxopropyl phosphate site.

It belongs to the PNP synthase family. Homooctamer; tetramer of dimers.

Its subcellular location is the cytoplasm. The enzyme catalyses 3-amino-2-oxopropyl phosphate + 1-deoxy-D-xylulose 5-phosphate = pyridoxine 5'-phosphate + phosphate + 2 H2O + H(+). Its pathway is cofactor biosynthesis; pyridoxine 5'-phosphate biosynthesis; pyridoxine 5'-phosphate from D-erythrose 4-phosphate: step 5/5. Functionally, catalyzes the complicated ring closure reaction between the two acyclic compounds 1-deoxy-D-xylulose-5-phosphate (DXP) and 3-amino-2-oxopropyl phosphate (1-amino-acetone-3-phosphate or AAP) to form pyridoxine 5'-phosphate (PNP) and inorganic phosphate. The protein is Pyridoxine 5'-phosphate synthase of Vibrio vulnificus (strain CMCP6).